Reading from the N-terminus, the 438-residue chain is UDP-N-acetylmuramoylalanine--D-glutamate ligase (438 aa).

Residue 112 to 118 (GSNGKST) coordinates ATP.

This sequence belongs to the MurCDEF family.

It is found in the cytoplasm. It catalyses the reaction UDP-N-acetyl-alpha-D-muramoyl-L-alanine + D-glutamate + ATP = UDP-N-acetyl-alpha-D-muramoyl-L-alanyl-D-glutamate + ADP + phosphate + H(+). It participates in cell wall biogenesis; peptidoglycan biosynthesis. In terms of biological role, cell wall formation. Catalyzes the addition of glutamate to the nucleotide precursor UDP-N-acetylmuramoyl-L-alanine (UMA). The protein is UDP-N-acetylmuramoylalanine--D-glutamate ligase of Shigella dysenteriae serotype 1 (strain Sd197).